Here is a 434-residue protein sequence, read N- to C-terminus: Na(+)/H(+) antiporter NhaA 1 (434 aa).

Over residues 1-15 (MISPNPALPTPPHAP) the composition is skewed to pro residues. The interval 1 to 21 (MISPNPALPTPPHAPTAPGRG) is disordered. The next 12 membrane-spanning stretches (helical) occupy residues 34 to 54 (GGIL…SPAA), 74 to 94 (LSVS…VVGL), 112 to 132 (ALPI…FTLI), 143 to 163 (GWAI…AVVG), 173 to 193 (FLLT…AVFY), 196 to 216 (GIAF…GILV), 222 to 242 (AWYV…ASGI), 245 to 265 (TIAG…RAGV), 294 to 314 (IAVP…LEGL), 326 to 346 (IIVA…LLVA), 362 to 382 (VLGL…VGEL), and 393 to 413 (AVKV…GTLL).

This sequence belongs to the NhaA Na(+)/H(+) (TC 2.A.33) antiporter family.

The protein localises to the cell membrane. The enzyme catalyses Na(+)(in) + 2 H(+)(out) = Na(+)(out) + 2 H(+)(in). Its function is as follows. Na(+)/H(+) antiporter that extrudes sodium in exchange for external protons. This Clavibacter michiganensis subsp. michiganensis (strain NCPPB 382) protein is Na(+)/H(+) antiporter NhaA 1.